The sequence spans 426 residues: Glutamate-1-semialdehyde 2,1-aminomutase (426 aa).

Lysine 265 is subject to N6-(pyridoxal phosphate)lysine.

It belongs to the class-III pyridoxal-phosphate-dependent aminotransferase family. HemL subfamily. As to quaternary structure, homodimer. The cofactor is pyridoxal 5'-phosphate.

Its subcellular location is the cytoplasm. It catalyses the reaction (S)-4-amino-5-oxopentanoate = 5-aminolevulinate. It functions in the pathway porphyrin-containing compound metabolism; protoporphyrin-IX biosynthesis; 5-aminolevulinate from L-glutamyl-tRNA(Glu): step 2/2. The sequence is that of Glutamate-1-semialdehyde 2,1-aminomutase from Salmonella arizonae (strain ATCC BAA-731 / CDC346-86 / RSK2980).